A 92-amino-acid polypeptide reads, in one-letter code: Small ribosomal subunit protein uS19 (92 aa).

It belongs to the universal ribosomal protein uS19 family.

Its function is as follows. Protein S19 forms a complex with S13 that binds strongly to the 16S ribosomal RNA. The sequence is that of Small ribosomal subunit protein uS19 from Prochlorococcus marinus (strain MIT 9312).